The sequence spans 379 residues: MSGTLALTEQLIARASVTPDDQHCQRLLIERLAALGFEHETIESNGVTNLWAVKRGVDGTAGKLLAFAGHTDVVPTGPLEQWHSAPFEPTHRDGKLYGRGAADMKASIAGFVVASEEFVAAHPAHRGSIAFLITSDEEGPATDGTIKVVEALQARGERMDYCIVGEPTSSARLGDMVKNGRRGSMSGKLIVKGVQGHIAYPHLAKNPVHLLAPALAELVAERWDDGNEYFPPTTWQVSNIHSGTGATNVIAGHADVMFNFRFSTASTVEGLQARVHAILDKHKLDYDLQWTVSGLPFLTPRGDLSNALAAAIRDETGVTTELSTTGGTSDGRFIARICPQVIEFGPLNASIHKTDEHIEVAHIEPLKNVYRRVLEQLIA.

A Zn(2+)-binding site is contributed by histidine 70. Residue aspartate 72 is part of the active site. Aspartate 103 contributes to the Zn(2+) binding site. The active-site Proton acceptor is the glutamate 137. The Zn(2+) site is built by glutamate 138, glutamate 166, and histidine 352.

The protein belongs to the peptidase M20A family. DapE subfamily. In terms of assembly, homodimer. Zn(2+) is required as a cofactor. Requires Co(2+) as cofactor.

The enzyme catalyses N-succinyl-(2S,6S)-2,6-diaminopimelate + H2O = (2S,6S)-2,6-diaminopimelate + succinate. It functions in the pathway amino-acid biosynthesis; L-lysine biosynthesis via DAP pathway; LL-2,6-diaminopimelate from (S)-tetrahydrodipicolinate (succinylase route): step 3/3. Functionally, catalyzes the hydrolysis of N-succinyl-L,L-diaminopimelic acid (SDAP), forming succinate and LL-2,6-diaminopimelate (DAP), an intermediate involved in the bacterial biosynthesis of lysine and meso-diaminopimelic acid, an essential component of bacterial cell walls. The polypeptide is Succinyl-diaminopimelate desuccinylase (Paraburkholderia xenovorans (strain LB400)).